The sequence spans 338 residues: NADPH dehydrogenase (338 aa).

Y28 serves as a coordination point for substrate. Residues A60 and Q102 each contribute to the FMN site. H164–H167 is a substrate binding site. FMN-binding positions include R215 and A307–R308.

The protein belongs to the NADH:flavin oxidoreductase/NADH oxidase family. NamA subfamily. In terms of assembly, homotetramer. It depends on FMN as a cofactor.

It catalyses the reaction A + NADPH + H(+) = AH2 + NADP(+). Its function is as follows. Catalyzes the reduction of the double bond of an array of alpha,beta-unsaturated aldehydes and ketones. It also reduces the nitro group of nitroester and nitroaromatic compounds. It could have a role in detoxification processes. This Bacillus velezensis (strain DSM 23117 / BGSC 10A6 / LMG 26770 / FZB42) (Bacillus amyloliquefaciens subsp. plantarum) protein is NADPH dehydrogenase.